A 398-amino-acid polypeptide reads, in one-letter code: Succinate--CoA ligase [ADP-forming] subunit beta (398 aa).

The 245-residue stretch at 9-253 (MALLNERGVS…AGASDPLEQE (245 aa)) folds into the ATP-grasp domain. ATP is bound by residues lysine 46, 53–55 (GRG), valine 111, and glutamate 116. Residues asparagine 208 and aspartate 222 each coordinate Mg(2+). Substrate-binding positions include asparagine 273 and 330-332 (GIM).

The protein belongs to the succinate/malate CoA ligase beta subunit family. As to quaternary structure, heterotetramer of two alpha and two beta subunits. Requires Mg(2+) as cofactor.

The enzyme catalyses succinate + ATP + CoA = succinyl-CoA + ADP + phosphate. The catalysed reaction is GTP + succinate + CoA = succinyl-CoA + GDP + phosphate. It functions in the pathway carbohydrate metabolism; tricarboxylic acid cycle; succinate from succinyl-CoA (ligase route): step 1/1. Succinyl-CoA synthetase functions in the citric acid cycle (TCA), coupling the hydrolysis of succinyl-CoA to the synthesis of either ATP or GTP and thus represents the only step of substrate-level phosphorylation in the TCA. The beta subunit provides nucleotide specificity of the enzyme and binds the substrate succinate, while the binding sites for coenzyme A and phosphate are found in the alpha subunit. In Zymomonas mobilis subsp. mobilis (strain ATCC 31821 / ZM4 / CP4), this protein is Succinate--CoA ligase [ADP-forming] subunit beta.